A 133-amino-acid polypeptide reads, in one-letter code: MQKSNIVEYKGLGRRKSSIARVKLVPGSGKVFINDRQPENYFPNKLVIQDMMQPLVLTKTAETYDVYVKVIGGGFNGQAGAIRLGITRALIQTREDLKTDLRKAGLVTRDSRVKERKKFGLYGARRAPQFTKR.

The protein belongs to the universal ribosomal protein uS9 family.

This is Small ribosomal subunit protein uS9 from Ureaplasma urealyticum serovar 10 (strain ATCC 33699 / Western).